The chain runs to 190 residues: Abscisic acid receptor PYL2 (190 aa).

Residues Phe28–Thr182 form an START-like region. Abscisate is bound by residues Lys64, Ala93–Glu98, Arg120–Ser126, and Glu147. Residues Ser89 to Ala93 carry the Gate loop motif. Positions His119–Leu121 match the Latch loop motif.

This sequence belongs to the PYR/PYL/RCAR abscisic acid intracellular receptor family. In terms of assembly, homodimer. Binds ABA on one subunit only. Interacts with HAB1, ABI1 and ABI2, and possibly with other PP2Cs. Binds to CARs protein in an ABA-independent manner, both at the plasma membrane and in the nucleus.

It localises to the cytoplasm. It is found in the nucleus. The protein localises to the cell membrane. In terms of biological role, receptor for abscisic acid (ABA) required for ABA-mediated responses such as stomatal closure and germination inhibition. Inhibits the activity of group-A protein phosphatases type 2C (PP2Cs) when activated by ABA. Can be activated by both (-)-ABA and (+)-ABA. In Arabidopsis thaliana (Mouse-ear cress), this protein is Abscisic acid receptor PYL2 (PYL2).